The following is a 98-amino-acid chain: Large ribosomal subunit protein eL21 (98 aa).

Residues 1 to 22 form a disordered region; the sequence is MVQMSEGFRRKTRKKLSKHPRE. Over residues 10–21 the composition is skewed to basic residues; it reads RKTRKKLSKHPR.

It belongs to the eukaryotic ribosomal protein eL21 family.

The chain is Large ribosomal subunit protein eL21 (rpl21e) from Methanocaldococcus jannaschii (strain ATCC 43067 / DSM 2661 / JAL-1 / JCM 10045 / NBRC 100440) (Methanococcus jannaschii).